Here is a 367-residue protein sequence, read N- to C-terminus: MTDAPELLKGPLEDRHRELGANFAEFGGWLMPVSYAGTVSEHSATRNAVGLFDVSHLGKALVRGPGAAQFVNSVLTNDLGRIRPGKAQYTLCCSESGGVIDDLIAYYVDDDEIFLVSNAANTAAVVDALQAVVPAGLTIINQHRSHAVLAVQGPRSTDVLGELGLPTGIDYMGYVDASYAGVPVRVCRTGYTGEQGYELLPPWESADVVFDALVAAVVDARGEPAGLGARDTLRTEMGYPLYGHELSLDISPLQARCGWAIGWKKDAFLGRDALLAEKAAGPRRLLRGLRMAGRGVLRPGLTVCAGDIPIGVTTSGTFSPTLQVGVALALIDSEAAVQDGQQIIVDVRGRAVECEVVRPPFIEVKTR.

This sequence belongs to the GcvT family. In terms of assembly, the glycine cleavage system is composed of four proteins: P, T, L and H.

The enzyme catalyses N(6)-[(R)-S(8)-aminomethyldihydrolipoyl]-L-lysyl-[protein] + (6S)-5,6,7,8-tetrahydrofolate = N(6)-[(R)-dihydrolipoyl]-L-lysyl-[protein] + (6R)-5,10-methylene-5,6,7,8-tetrahydrofolate + NH4(+). The glycine cleavage system catalyzes the degradation of glycine. This Mycobacterium leprae (strain Br4923) protein is Aminomethyltransferase.